A 414-amino-acid chain; its full sequence is tRNA methyltransferase 10 homolog C (414 aa).

The N-terminal 35 residues, 1–35 (MNVTVRFLRPFARYLVPYTFHRTRSNSYSRVLQRY), are a transit peptide targeting the mitochondrion. Position 79 is a phosphoserine (Ser-79). A coiled-coil region spans residues 133-162 (GKEMMKKAKQMKKEMKAAAREEAKRARSLE). One can recognise an SAM-dependent MTase TRM10-type domain in the interval 186 to 378 (LGWKGVQAMQ…KFVPRRKHTG (193 aa)).

Belongs to the class IV-like SAM-binding methyltransferase superfamily. TRM10 family. Component of mitochondrial ribonuclease P, a complex composed of TRMT10C/MRPP1, HSD17B10/MRPP2 and PRORP/MRPP3. Interacts with HSD17B10/MRPP2; forming the MRPP1-MRPP2 subcomplex of the mitochondrial ribonuclease P complex. Interacts with GRSF1.

It is found in the mitochondrion matrix. It localises to the mitochondrion nucleoid. The enzyme catalyses adenosine(9) in tRNA + S-adenosyl-L-methionine = N(1)-methyladenosine(9) in tRNA + S-adenosyl-L-homocysteine + H(+). The catalysed reaction is guanosine(9) in tRNA + S-adenosyl-L-methionine = N(1)-methylguanosine(9) in tRNA + S-adenosyl-L-homocysteine + H(+). It carries out the reaction an adenosine in mRNA + S-adenosyl-L-methionine = an N(1)-methyladenosine in mRNA + S-adenosyl-L-homocysteine + H(+). In terms of biological role, mitochondrial tRNA N(1)-methyltransferase involved in mitochondrial tRNA maturation. Component of mitochondrial ribonuclease P, a complex composed of TRMT10C/MRPP1, HSD17B10/MRPP2 and PRORP/MRPP3, which cleaves tRNA molecules in their 5'-ends. Together with HSD17B10/MRPP2, forms a subcomplex of the mitochondrial ribonuclease P, named MRPP1-MRPP2 subcomplex, which displays functions that are independent of the ribonuclease P activity. The MRPP1-MRPP2 subcomplex catalyzes the formation of N(1)-methylguanine and N(1)-methyladenine at position 9 (m1G9 and m1A9, respectively) in tRNAs; TRMT10C/MRPP1 acting as the catalytic N(1)-methyltransferase subunit. The MRPP1-MRPP2 subcomplex also acts as a tRNA maturation platform: following 5'-end cleavage by the mitochondrial ribonuclease P complex, the MRPP1-MRPP2 subcomplex enhances the efficiency of 3'-processing catalyzed by ELAC2, retains the tRNA product after ELAC2 processing and presents the nascent tRNA to the mitochondrial CCA tRNA nucleotidyltransferase TRNT1 enzyme. In addition to tRNA N(1)-methyltransferase activity, TRMT10C/MRPP1 also acts as a mRNA N(1)-methyltransferase by mediating methylation of adenosine residues at the N(1) position of MT-ND5 mRNA. Associates with mitochondrial DNA complexes at the nucleoids to initiate RNA processing and ribosome assembly. This Rattus norvegicus (Rat) protein is tRNA methyltransferase 10 homolog C.